The sequence spans 596 residues: Elongation factor 4 (596 aa).

In terms of domain architecture, tr-type G spans 2 to 184 (KQIRNFSIIA…VIVAKIPPPE (183 aa)). GTP contacts are provided by residues 14–19 (DHGKST) and 131–134 (NKID).

It belongs to the TRAFAC class translation factor GTPase superfamily. Classic translation factor GTPase family. LepA subfamily.

The protein resides in the cell inner membrane. The enzyme catalyses GTP + H2O = GDP + phosphate + H(+). Functionally, required for accurate and efficient protein synthesis under certain stress conditions. May act as a fidelity factor of the translation reaction, by catalyzing a one-codon backward translocation of tRNAs on improperly translocated ribosomes. Back-translocation proceeds from a post-translocation (POST) complex to a pre-translocation (PRE) complex, thus giving elongation factor G a second chance to translocate the tRNAs correctly. Binds to ribosomes in a GTP-dependent manner. This Shewanella baltica (strain OS223) protein is Elongation factor 4.